A 455-amino-acid chain; its full sequence is Oxysterols receptor LXR-beta (455 aa).

Residues 1-10 (MSTPTTNSVD) show a composition bias toward polar residues. A disordered region spans residues 1–53 (MSTPTTNSVDTPLPGNGPSTPSSSPGGKEDGPEPCPGGADPDVPSTDGADSAS). Positions 1–80 (MSTPTTNSVD…GPAPKMLGDE (80 aa)) are transactivation AF-1; required for ligand-independent transactivation function. The segment covering 14-26 (PGNGPSTPSSSPG) has biased composition (low complexity). The segment at residues 79 to 156 (DELCQVCGDT…AGMREQCVLS (78 aa)) is a DNA-binding region (nuclear receptor). 2 NR C4-type zinc fingers span residues 82 to 102 (CQVC…CEGC) and 120 to 144 (CRGG…LRKC). A disordered region spans residues 164 to 210 (KIRKQQQQQQQQSSPTGPGVSSSSPASGPGASPGGSDGGGQGSGEGE). A compositionally biased stretch (low complexity) spans 168-193 (QQQQQQQQSSPTGPGVSSSSPASGPG). Residues 194-210 (ASPGGSDGGGQGSGEGE) show a composition bias toward gly residues. The tract at residues 214-455 (LTAAQELMIQ…LLSEIWDVHE (242 aa)) is transactivation AF-2; required for ligand-dependent transactivation function; mediates interaction with CCAR2. Positions 217–455 (AQELMIQQLV…LLSEIWDVHE (239 aa)) constitute an NR LBD domain. Glycyl lysine isopeptide (Lys-Gly) (interchain with G-Cter in SUMO2) cross-links involve residues Lys404 and Lys442.

It belongs to the nuclear hormone receptor family. NR1 subfamily. As to quaternary structure, forms a heterodimer with RXR. Interacts with CCAR2 (via N-terminus) in a ligand-independent manner. Interacts (when sumoylated) with GPS2; interaction with GPS2 onto hepatic acute phase protein promoters prevents N-Cor corepressor complex dissociation. Interacts with ABCA12 and ABCA1; this interaction is required for ABCA1 localization to the cell surface and is necessary for its normal activity and stability. Sumoylated by SUMO2 at Lys-404 and Lys-442 during the hepatic acute phase response, leading to promote interaction with GPS2 and prevent N-Cor corepressor complex dissociation.

It localises to the nucleus. In terms of biological role, nuclear receptor that exhibits a ligand-dependent transcriptional activation activity. Binds preferentially to double-stranded oligonucleotide direct repeats having the consensus half-site sequence 5'-AGGTCA-3' and 4-nt spacing (DR-4). Regulates cholesterol uptake through MYLIP-dependent ubiquitination of LDLR, VLDLR and LRP8; DLDLR and LRP8. Interplays functionally with RORA for the regulation of genes involved in liver metabolism. Induces LPCAT3-dependent phospholipid remodeling in endoplasmic reticulum (ER) membranes of hepatocytes, driving SREBF1 processing and lipogenesis. Via LPCAT3, triggers the incorporation of arachidonate into phosphatidylcholines of ER membranes, increasing membrane dynamics and enabling triacylglycerols transfer to nascent very low-density lipoprotein (VLDL) particles. Via LPCAT3 also counteracts lipid-induced ER stress response and inflammation, likely by modulating SRC kinase membrane compartmentalization and limiting the synthesis of lipid inflammatory mediators. Plays an anti-inflammatory role during the hepatic acute phase response by acting as a corepressor: inhibits the hepatic acute phase response by preventing dissociation of the N-Cor corepressor complex. This chain is Oxysterols receptor LXR-beta (NR1H2), found in Bos taurus (Bovine).